Here is a 143-residue protein sequence, read N- to C-terminus: MDQTLSEFGNVFVFFLLGVVFVAGGYLTARMLRPSRPNPVKTSTYECGEEAVGSAWVKFNIRFYVVALIFIIFDVEVVFLFPWATVFRQLGSFALVEALVFAGILILGLVYAWVKGDLDWVRPTPSVPKMPEMPASKSSSQRD.

Helical transmembrane passes span 8–28 (FGNVFVFFLLGVVFVAGGYLT), 63–83 (FYVVALIFIIFDVEVVFLFPW), and 93–113 (FALVEALVFAGILILGLVYAW).

Belongs to the complex I subunit 3 family. NDH-1 is composed of 14 different subunits. Subunits NuoA, H, J, K, L, M, N constitute the membrane sector of the complex.

It localises to the cell inner membrane. The catalysed reaction is a quinone + NADH + 5 H(+)(in) = a quinol + NAD(+) + 4 H(+)(out). In terms of biological role, NDH-1 shuttles electrons from NADH, via FMN and iron-sulfur (Fe-S) centers, to quinones in the respiratory chain. The immediate electron acceptor for the enzyme in this species is believed to be a menaquinone. Couples the redox reaction to proton translocation (for every two electrons transferred, four hydrogen ions are translocated across the cytoplasmic membrane), and thus conserves the redox energy in a proton gradient. The chain is NADH-quinone oxidoreductase subunit A from Chlorobium phaeovibrioides (strain DSM 265 / 1930) (Prosthecochloris vibrioformis (strain DSM 265)).